A 663-amino-acid polypeptide reads, in one-letter code: UvrABC system protein B (663 aa).

The segment covering 1 to 10 (MIDKRDDKPF) has biased composition (basic and acidic residues). Positions 1 to 23 (MIDKRDDKPFKLKSKYKPSGDQP) are disordered. The Helicase ATP-binding domain maps to 31–271 (DNIEGGEKAQ…EQSIAKIQAE (241 aa)). 44–51 (GATGTGKT) provides a ligand contact to ATP. Positions 97–120 (YYDYYQPEAYVPSSDTYIEKDSSV) match the Beta-hairpin motif. Residues 435–601 (QMDDLLGEIN…TIKKDIRGLI (167 aa)) enclose the Helicase C-terminal domain. The 36-residue stretch at 627–662 (KEAINALQKQMQEAAELLDFELAAQMRDLILELKLM) folds into the UVR domain.

The protein belongs to the UvrB family. As to quaternary structure, forms a heterotetramer with UvrA during the search for lesions. Interacts with UvrC in an incision complex.

The protein localises to the cytoplasm. Functionally, the UvrABC repair system catalyzes the recognition and processing of DNA lesions. A damage recognition complex composed of 2 UvrA and 2 UvrB subunits scans DNA for abnormalities. Upon binding of the UvrA(2)B(2) complex to a putative damaged site, the DNA wraps around one UvrB monomer. DNA wrap is dependent on ATP binding by UvrB and probably causes local melting of the DNA helix, facilitating insertion of UvrB beta-hairpin between the DNA strands. Then UvrB probes one DNA strand for the presence of a lesion. If a lesion is found the UvrA subunits dissociate and the UvrB-DNA preincision complex is formed. This complex is subsequently bound by UvrC and the second UvrB is released. If no lesion is found, the DNA wraps around the other UvrB subunit that will check the other stand for damage. This Streptococcus pyogenes serotype M2 (strain MGAS10270) protein is UvrABC system protein B.